A 764-amino-acid polypeptide reads, in one-letter code: Reticulon-1 (764 aa).

Disordered regions lie at residues 1–37 (MAAN…GGAL), 115–147 (PDIK…SGIE), 247–400 (LYNS…SEIE), and 455–475 (ESCD…DSPM). The span at 261–282 (VTISFTGMETTLQTEYPENQQG) shows a compositional bias: polar residues. The span at 328–337 (EEQRKYKISE) shows a compositional bias: basic and acidic residues. In terms of domain architecture, Reticulon spans 578 to 764 (AIELLYWRDI…AKIPGTKQKE (187 aa)). Helical transmembrane passes span 607-627 (FSVV…TISF) and 696-716 (VLMW…LLIM).

It localises to the endoplasmic reticulum membrane. It is found in the nucleus. Its function is as follows. Inhibits amyloid precursor protein processing, probably by blocking BACE1 activity. The polypeptide is Reticulon-1 (Xenopus tropicalis (Western clawed frog)).